Consider the following 252-residue polypeptide: Phosphate import ATP-binding protein PstB 1 (252 aa).

The ABC transporter domain maps to 6–247 (ISSKDLHLYY…PKEKQTEDYI (242 aa)). An ATP-binding site is contributed by 38–45 (GPSGCGKS).

Belongs to the ABC transporter superfamily. Phosphate importer (TC 3.A.1.7) family. As to quaternary structure, the complex is composed of two ATP-binding proteins (PstB), two transmembrane proteins (PstC and PstA) and a solute-binding protein (PstS).

Its subcellular location is the cell membrane. It carries out the reaction phosphate(out) + ATP + H2O = ADP + 2 phosphate(in) + H(+). In terms of biological role, part of the ABC transporter complex PstSACB involved in phosphate import. Responsible for energy coupling to the transport system. This chain is Phosphate import ATP-binding protein PstB 1, found in Enterococcus faecalis (strain ATCC 700802 / V583).